Here is a 123-residue protein sequence, read N- to C-terminus: RxLR effector protein Avh262 (123 aa).

A signal peptide spans 1–18; sequence MLPVAVVLVVFAVAVTSA. The interval 24–46 is disordered; the sequence is VNPLPRRRRLKGTEEKGHHTNVN. Residues 30–50 carry the RxLR-dEER motif; sequence RRRLKGTEEKGHHTNVNDEER. Residues 34-46 are compositionally biased toward basic and acidic residues; sequence KGTEEKGHHTNVN. The biP-binding stretch occupies residues 60–82; it reads LISKLKVKINAKLLAGDSAKPAT.

It belongs to the RxLR effector family. In terms of assembly, interacts with host plant ER-luminal binding immunoglobulin proteins (BiPs) such as soybean BiP1, BiP2, BiP3 and BiP4.

It is found in the secreted. The protein localises to the host endoplasmic reticulum. Its function is as follows. Effector that suppresses plant defense responses during the early stages of pathogen infection. Suppresses cell death induced by effectors and PAMPs in plant hosts. Avh262 stabilizes endoplasmic reticulum (ER)-luminal binding immunoglobulin proteins (BiPs), which act as negative regulators of plant resistance to Phytophthora. By stabilizing BiPs, Avh262 suppresses ER stress-triggered cell death and facilitates Phytophthora infection. The polypeptide is RxLR effector protein Avh262 (Phytophthora sojae (Soybean stem and root rot agent)).